Consider the following 151-residue polypeptide: Cytochrome c-type biogenesis protein CcmE (151 aa).

Residues 1–8 lie on the Cytoplasmic side of the membrane; that stretch reads MNPQRKKR. The chain crosses the membrane as a helical; Signal-anchor for type II membrane protein span at residues 9–29; the sequence is LLLIVGLLVGVGVAVGFALSA. The Periplasmic segment spans residues 30–151; it reads LQQNINLFYT…QAAAGGETKP (122 aa). Residues His124 and Tyr128 each coordinate heme.

This sequence belongs to the CcmE/CycJ family.

Its subcellular location is the cell inner membrane. Its function is as follows. Heme chaperone required for the biogenesis of c-type cytochromes. Transiently binds heme delivered by CcmC and transfers the heme to apo-cytochromes in a process facilitated by CcmF and CcmH. This chain is Cytochrome c-type biogenesis protein CcmE, found in Pseudomonas putida (strain ATCC 700007 / DSM 6899 / JCM 31910 / BCRC 17059 / LMG 24140 / F1).